A 449-amino-acid polypeptide reads, in one-letter code: Jacalin-related lectin 20 (449 aa).

2 disordered regions span residues Met-1–Ala-20 and Ala-294–Gly-314. Ala-2 carries the post-translational modification N-acetylalanine. 3 Jacalin-type lectin domains span residues Ala-2–Pro-144, Pro-147–Ala-294, and Thr-303–Pro-446.

This sequence belongs to the jacalin lectin family.

This chain is Jacalin-related lectin 20 (JAL20), found in Arabidopsis thaliana (Mouse-ear cress).